The following is a 237-amino-acid chain: RNA-binding protein 38 (237 aa).

The interval 1–24 is disordered; the sequence is MLLQPACSPSVFPRPSAAPSAMHG. Residues 32 to 109 form the RRM domain; that stretch reads TKIFVGGLPY…RKANVNLAYL (78 aa).

Belongs to the RBM38 family. As to expression, expressed in cardiac and skeletal muscle tissues.

It localises to the cytoplasm. The protein localises to the cytosol. The protein resides in the nucleus. Its function is as follows. RNA-binding protein that specifically bind the 3'-UTR of CDKN1A transcripts, leading to maintain the stability of CDKN1A transcripts, thereby acting as a mediator of the p53/TP53 family to regulate CDKN1A. CDKN1A is a cyclin-dependent kinase inhibitor transcriptionally regulated by the p53/TP53 family to induce cell cycle arrest. Has the ability to induce cell cycle arrest in G1 and maintain the stability of CDKN1A transcripts induced by p53/TP53. Also acts as a mRNA splicing factor. Specifically regulates the expression of FGFR2-IIIb, an epithelial cell-specific isoform of FGFR2. Plays a role in myogenic differentiation. The sequence is that of RNA-binding protein 38 (Rbm38) from Mus musculus (Mouse).